Consider the following 717-residue polypeptide: DNA ligase (717 aa).

NAD(+)-binding positions include 44 to 48 (DADYD), 93 to 94 (SL), and E127. Catalysis depends on K129, which acts as the N6-AMP-lysine intermediate. NAD(+) contacts are provided by R150, E186, K302, and K326. The Zn(2+) site is built by C431, C434, C455, and C461. The BRCT domain occupies 639–717 (ATDSPVAGKT…EDEWLALIGG (79 aa)).

This sequence belongs to the NAD-dependent DNA ligase family. LigA subfamily. Mg(2+) is required as a cofactor. The cofactor is Mn(2+).

The catalysed reaction is NAD(+) + (deoxyribonucleotide)n-3'-hydroxyl + 5'-phospho-(deoxyribonucleotide)m = (deoxyribonucleotide)n+m + AMP + beta-nicotinamide D-nucleotide.. DNA ligase that catalyzes the formation of phosphodiester linkages between 5'-phosphoryl and 3'-hydroxyl groups in double-stranded DNA using NAD as a coenzyme and as the energy source for the reaction. It is essential for DNA replication and repair of damaged DNA. In Rhizobium meliloti (strain 1021) (Ensifer meliloti), this protein is DNA ligase.